A 360-amino-acid polypeptide reads, in one-letter code: Phospho-N-acetylmuramoyl-pentapeptide-transferase (360 aa).

Transmembrane regions (helical) follow at residues 21-41 (YVTF…LWWG), 74-94 (MGGI…GDLG), 97-117 (YVWV…IDDY), 135-155 (ILQS…ADTV), 168-188 (IMPQ…VGSS), 199-219 (GLAI…AYLS), 236-256 (AGEL…FLWF), 263-283 (VFMG…IAVL), 288-308 (ILLV…ILQV), and 338-358 (VIVR…ATLK).

The protein belongs to the glycosyltransferase 4 family. MraY subfamily. It depends on Mg(2+) as a cofactor.

The protein resides in the cell inner membrane. It carries out the reaction UDP-N-acetyl-alpha-D-muramoyl-L-alanyl-gamma-D-glutamyl-meso-2,6-diaminopimeloyl-D-alanyl-D-alanine + di-trans,octa-cis-undecaprenyl phosphate = di-trans,octa-cis-undecaprenyl diphospho-N-acetyl-alpha-D-muramoyl-L-alanyl-D-glutamyl-meso-2,6-diaminopimeloyl-D-alanyl-D-alanine + UMP. Its pathway is cell wall biogenesis; peptidoglycan biosynthesis. In terms of biological role, catalyzes the initial step of the lipid cycle reactions in the biosynthesis of the cell wall peptidoglycan: transfers peptidoglycan precursor phospho-MurNAc-pentapeptide from UDP-MurNAc-pentapeptide onto the lipid carrier undecaprenyl phosphate, yielding undecaprenyl-pyrophosphoryl-MurNAc-pentapeptide, known as lipid I. This chain is Phospho-N-acetylmuramoyl-pentapeptide-transferase, found in Shewanella violacea (strain JCM 10179 / CIP 106290 / LMG 19151 / DSS12).